A 392-amino-acid polypeptide reads, in one-letter code: Stilbene synthase 6 (392 aa).

A substrate-binding site is contributed by 55-58 (KFNR). Cys164 is an active-site residue. Substrate contacts are provided by residues Leu267 and 305–307 (GGP).

Belongs to the thiolase-like superfamily. Chalcone/stilbene synthases family. In terms of assembly, homodimer.

It is found in the cytoplasm. The enzyme catalyses 4-coumaroyl-CoA + 3 malonyl-CoA + 3 H(+) = trans-resveratrol + 4 CO2 + 4 CoA. The protein operates within phytoalexin biosynthesis; 3,4',5-trihydroxystilbene biosynthesis; 3,4',5-trihydroxystilbene from trans-4-coumarate: step 2/2. Mediates resistance to pathogens which are sensitive to stilbenes. The polypeptide is Stilbene synthase 6 (STS) (Vitis vinifera (Grape)).